Here is a 424-residue protein sequence, read N- to C-terminus: CinA-like protein (424 aa).

This sequence belongs to the CinA family.

In Shewanella piezotolerans (strain WP3 / JCM 13877), this protein is CinA-like protein.